The chain runs to 469 residues: UDP-glycosyltransferase 43 (469 aa).

Residues S280, 345–346 (WV), 363–371 (HCGWNSILE), and 385–388 (YSEQ) contribute to the UDP-alpha-D-glucose site.

Belongs to the UDP-glycosyltransferase family.

With respect to regulation, inhibited by Cu(2+) or Zn(2+). In terms of biological role, glycosyltransferase that catalyzes the C-glucosylation of daidzein to puerarin. Shows activity with the isoflavones daidzein and genistein, but has no activity towards flavonoids such as 2-hydroxynaringenin. Can use UDP-glucose, but not UDP-galactose or UDP-glucuronic acid as sugar donor. Does not require bivalent cations for activity. This chain is UDP-glycosyltransferase 43, found in Pueraria montana var. lobata (Kudzu vine).